Reading from the N-terminus, the 233-residue chain is MFQVQTAGTRTGTSSPDTTTSEAGLGSTPPMPDFDKQSYWHQRFESETAFEWLIPSSTFMPLLEAFLNKLPGSDARILHLGFGTSDLQVQLRTRGFVNITNVDYEPLAIERGRHLEMTAFGDVTMQYITADATNLASVPEISSQKYHLVVDKSTADAISCAGDDAVLAMAQGIHRSLADDGVWISVSYSAFRYDSPQLPFDVEVIARIPTAKARATDPDIYHYCYLLRPKPKV.

The tract at residues 1–32 is disordered; sequence MFQVQTAGTRTGTSSPDTTTSEAGLGSTPPMP. Over residues 9 to 21 the composition is skewed to low complexity; it reads TRTGTSSPDTTTS. Residues Trp40, Trp52, and Gly81 each coordinate S-adenosyl-L-methionine. Residues 140-146 carry the Required for methyltransferase activity motif; sequence EISSQKY.

This sequence belongs to the methyltransferase superfamily.

Its function is as follows. Methyltransferase; part of the gene cluster that mediates the biosynthesis of sordarial, a salicylic aldehyde structurally related to the phytotoxin pyriculol. The most interesting aspect of this pathway is formation of an aromatic product from the highly reducing polyketide synthase srdA. SrdA synthesizes a reduced polyketide chain from one molecule of acetyl-CoA and five molecules of malonyl-CoA. The polyketide chain is then reductively released as an aldehyde. The oxidoreductases srdC, srdD and srdE then oxidize one of the hydroxy groups to facilitate the intramolecular aldol condensation, followed by dehydration to yield a salicylic aldehyde. This aldehyde can undergo facile reduction by endogenous reductases to yield the alcohol 1-hydroxy-2-hydroxymethyl-3-pent-1,3-dienylbenzene. The flavin-dependent srdI counteract against the propensity of the aldehydes to be reduced under physiological conditions and is responsible for reoxidizing 1-hydroxy-2-hydroxymethyl-3-pent-1,3-dienylbenzene back to the salicylic aldehyde. This salicylic aldehyde is then selectively epoxidized by the cupin-domain-containing oxidoreductase srdB to yield the epoxide, which can be hydrolyzed stereoselectively by the hydrolase srdG to give the final product sordarial. The polypeptide is Methyltransferase srdJ (Neurospora crassa (strain ATCC 24698 / 74-OR23-1A / CBS 708.71 / DSM 1257 / FGSC 987)).